Here is a 357-residue protein sequence, read N- to C-terminus: U5 small nuclear ribonucleoprotein 40 kDa protein (357 aa).

Lysine 18 participates in a covalent cross-link: Glycyl lysine isopeptide (Lys-Gly) (interchain with G-Cter in SUMO2). Asymmetric dimethylarginine is present on arginine 21. 7 WD repeats span residues 64-103, 107-146, 149-189, 191-230, 233-272, 283-322, and 325-357; these read GHEG…GNYA, GYSG…RVKR, GHTS…AIQT, QNTY…LTYT, GHAD…PKER, NFEK…ILYK, and GHAG…GEIQ. Lysine 270 participates in a covalent cross-link: Glycyl lysine isopeptide (Lys-Gly) (interchain with G-Cter in SUMO2).

Component of the pre-catalytic and catalytic spliceosome complexes. Component of the postcatalytic spliceosome P complex. Part of the U5 snRNP complex. Interacts with PRPF8. Component of the U4/U6-U5 tri-snRNP complex composed of the U4, U6 and U5 snRNAs and at least PRPF3, PRPF4, PRPF6, PRPF8, PRPF31, SNRNP200, TXNL4A, WDR57, SNRNP40, DDX23, CD2BP2, PPIH, SNU13, EFTUD2, SART1 and USP39. Component of the minor spliceosome, which splices U12-type introns.

Its subcellular location is the nucleus. In terms of biological role, required for pre-mRNA splicing as component of the activated spliceosome. Component of the U5 small nuclear ribonucleoprotein (snRNP) complex and the U4/U6-U5 tri-snRNP complex, building blocks of the spliceosome. As a component of the minor spliceosome, involved in the splicing of U12-type introns in pre-mRNAs. This chain is U5 small nuclear ribonucleoprotein 40 kDa protein (SNRNP40), found in Pongo abelii (Sumatran orangutan).